Consider the following 344-residue polypeptide: Uroporphyrinogen decarboxylase (344 aa).

Substrate contacts are provided by residues 25–29, Asp-75, Tyr-152, Ser-207, and His-323; that span reads RQAGR.

It belongs to the uroporphyrinogen decarboxylase family. Homodimer.

It is found in the cytoplasm. It carries out the reaction uroporphyrinogen III + 4 H(+) = coproporphyrinogen III + 4 CO2. It functions in the pathway porphyrin-containing compound metabolism; protoporphyrin-IX biosynthesis; coproporphyrinogen-III from 5-aminolevulinate: step 4/4. Catalyzes the decarboxylation of four acetate groups of uroporphyrinogen-III to yield coproporphyrinogen-III. This is Uroporphyrinogen decarboxylase from Ruegeria pomeroyi (strain ATCC 700808 / DSM 15171 / DSS-3) (Silicibacter pomeroyi).